The sequence spans 578 residues: SCARECROW-LIKE protein 7 (578 aa).

Residues 18–29 are compositionally biased toward low complexity; that stretch reads VIQQQQQQQQQQ. Disordered regions lie at residues 18–84 and 146–173; these read VIQQ…LAYG and PPPP…APRP. Over residues 49 to 61 the composition is skewed to basic residues; it reads PHHHQQKHHHHHQ. Low complexity predominate over residues 62–74; sequence QMPAMPQAPPSSH. Pro residues predominate over residues 146 to 156; the sequence is PPPPVPSPPPT. Over residues 157 to 173 the composition is skewed to low complexity; sequence HAAATATATAATAAPRP. Residues 198–578 enclose the GRAS domain; sequence SADASCSAPI…RPLLTVSAWR (381 aa). The interval 205 to 264 is leucine repeat I (LRI); it reads APILQSLLSCSRAAATDPGLAAAELASVRAAATDAGDPSERLAFYFADALSRRLACGTGA. A VHIID region spans residues 283 to 349; that stretch reads YKTLNDACPY…GKPTRIRITG (67 aa). The VHIID motif lies at 314–318; the sequence is IHIVD. The interval 365-397 is leucine repeat II (LRII); that stretch reads ATNTRLRDFAKLLGVDFEFVPLLRPVHELNKSD. The interval 406–497 is PFYRE; the sequence is VAVNFMLQLY…RWMFGERIQR (92 aa). Residues 414-418 carry the LXXLL motif motif; the sequence is LYHLL. Residues 500-578 are SAW; it reads GPEEGADRTE…RPLLTVSAWR (79 aa).

Belongs to the GRAS family. Homodimer.

The protein resides in the nucleus. Functionally, probable transcription factor involved in plant development. Involved in environmental abiotic stress resistance. May increase the expression of stress-responsive genes. Binds DNA in vitro. This Oryza sativa subsp. japonica (Rice) protein is SCARECROW-LIKE protein 7.